The following is a 546-amino-acid chain: Thermolysin (546 aa).

A signal peptide spans 1–25; sequence MNKRAMLGAIGLAFGLMAWPFGASA. Residues 26–228 constitute a propeptide, activation peptide; sequence KEKSMVWNEQ…EAKPGGGQPV (203 aa). The Ca(2+) site is built by Asp-287, Asp-289, Gln-291, and Asp-368. His-372 serves as a coordination point for Zn(2+). Residue Glu-373 is part of the active site. Positions 376 and 396 each coordinate Zn(2+). Ca(2+) contacts are provided by Glu-407, Asn-413, Asp-415, Glu-417, Glu-420, Tyr-423, Thr-424, Ile-427, and Asp-430. His-461 acts as the Proton donor in catalysis.

It belongs to the peptidase M4 family. The cofactor is Ca(2+). It depends on Zn(2+) as a cofactor.

The protein localises to the secreted. It carries out the reaction Preferential cleavage: Xaa-|-Leu &gt; Xaa-|-Phe.. Its function is as follows. Extracellular zinc metalloprotease. The polypeptide is Thermolysin (Alicyclobacillus acidocaldarius subsp. acidocaldarius (Bacillus acidocaldarius)).